The sequence spans 443 residues: Probable D-serine dehydratase (443 aa).

Position 116 is an N6-(pyridoxal phosphate)lysine (Lys116).

The protein belongs to the serine/threonine dehydratase family. DsdA subfamily. Requires pyridoxal 5'-phosphate as cofactor.

The catalysed reaction is D-serine = pyruvate + NH4(+). The sequence is that of Probable D-serine dehydratase from Bacillus cereus (strain B4264).